The chain runs to 427 residues: Serine hydroxymethyltransferase (427 aa).

(6S)-5,6,7,8-tetrahydrofolate-binding positions include Leu118 and 122–124; that span reads GHL. Lys227 is subject to N6-(pyridoxal phosphate)lysine. (6S)-5,6,7,8-tetrahydrofolate contacts are provided by residues Glu243 and 351–353; that span reads SPF.

The protein belongs to the SHMT family. In terms of assembly, homodimer. It depends on pyridoxal 5'-phosphate as a cofactor.

It is found in the cytoplasm. It carries out the reaction (6R)-5,10-methylene-5,6,7,8-tetrahydrofolate + glycine + H2O = (6S)-5,6,7,8-tetrahydrofolate + L-serine. It participates in one-carbon metabolism; tetrahydrofolate interconversion. It functions in the pathway amino-acid biosynthesis; glycine biosynthesis; glycine from L-serine: step 1/1. Catalyzes the reversible interconversion of serine and glycine with tetrahydrofolate (THF) serving as the one-carbon carrier. This reaction serves as the major source of one-carbon groups required for the biosynthesis of purines, thymidylate, methionine, and other important biomolecules. Also exhibits THF-independent aldolase activity toward beta-hydroxyamino acids, producing glycine and aldehydes, via a retro-aldol mechanism. This Thermotoga maritima (strain ATCC 43589 / DSM 3109 / JCM 10099 / NBRC 100826 / MSB8) protein is Serine hydroxymethyltransferase.